The following is a 273-amino-acid chain: NH(3)-dependent NAD(+) synthetase (273 aa).

45–52 (GISGGQDS) contacts ATP. Aspartate 51 lines the Mg(2+) pocket. Arginine 139 contributes to the deamido-NAD(+) binding site. An ATP-binding site is contributed by threonine 159. Glutamate 164 is a Mg(2+) binding site. Residues lysine 172 and aspartate 179 each coordinate deamido-NAD(+). Lysine 188 and threonine 210 together coordinate ATP. Deamido-NAD(+) is bound at residue 259–260 (HK).

The protein belongs to the NAD synthetase family. As to quaternary structure, homodimer.

It carries out the reaction deamido-NAD(+) + NH4(+) + ATP = AMP + diphosphate + NAD(+) + H(+). It participates in cofactor biosynthesis; NAD(+) biosynthesis; NAD(+) from deamido-NAD(+) (ammonia route): step 1/1. Its function is as follows. Catalyzes the ATP-dependent amidation of deamido-NAD to form NAD. Uses ammonia as a nitrogen source. The chain is NH(3)-dependent NAD(+) synthetase from Bacillus pumilus (strain SAFR-032).